The chain runs to 100 residues: Urease subunit gamma (100 aa).

Belongs to the urease gamma subunit family. In terms of assembly, heterotrimer of UreA (gamma), UreB (beta) and UreC (alpha) subunits. Three heterotrimers associate to form the active enzyme.

It localises to the cytoplasm. The catalysed reaction is urea + 2 H2O + H(+) = hydrogencarbonate + 2 NH4(+). It participates in nitrogen metabolism; urea degradation; CO(2) and NH(3) from urea (urease route): step 1/1. The chain is Urease subunit gamma from Pseudomonas fluorescens (strain ATCC BAA-477 / NRRL B-23932 / Pf-5).